The primary structure comprises 416 residues: RNA polymerase sigma-C factor (416 aa).

The Polymerase core binding signature appears at 205-218 (DLVQEGTLGLERAV). Residues 374-393 (LAEIGRALDLSRERVRQIES) constitute a DNA-binding region (H-T-H motif).

This sequence belongs to the sigma-70 factor family.

Its function is as follows. Sigma factors are initiation factors that promote the attachment of RNA polymerase to specific initiation sites and are then released. This is RNA polymerase sigma-C factor (sigC) from Nostoc sp. (strain PCC 7120 / SAG 25.82 / UTEX 2576).